A 156-amino-acid chain; its full sequence is Probable succinate transporter subunit YjjB (156 aa).

A run of 4 helical transmembrane segments spans residues 7–27 (WALL…AMVF), 54–74 (FGMN…IIGI), 86–106 (VFTV…TAMI), and 128–148 (FLKA…PGIW).

The protein belongs to the ThrE exporter (TC 2.A.79) family. As to quaternary structure, the transporter is composed of YjjB and YjjP.

The protein localises to the cell inner membrane. Involved in succinate export with YjjP. Both proteins are required for export. The sequence is that of Probable succinate transporter subunit YjjB from Pectobacterium atrosepticum (strain SCRI 1043 / ATCC BAA-672) (Erwinia carotovora subsp. atroseptica).